Consider the following 94-residue polypeptide: Phosphoribosyl-ATP pyrophosphatase (94 aa).

This sequence belongs to the PRA-PH family.

It is found in the cytoplasm. The catalysed reaction is 1-(5-phospho-beta-D-ribosyl)-ATP + H2O = 1-(5-phospho-beta-D-ribosyl)-5'-AMP + diphosphate + H(+). The protein operates within amino-acid biosynthesis; L-histidine biosynthesis; L-histidine from 5-phospho-alpha-D-ribose 1-diphosphate: step 2/9. The polypeptide is Phosphoribosyl-ATP pyrophosphatase (Pyrobaculum neutrophilum (strain DSM 2338 / JCM 9278 / NBRC 100436 / V24Sta) (Thermoproteus neutrophilus)).